A 487-amino-acid chain; its full sequence is 6-phosphogluconate dehydrogenase, decarboxylating 3, chloroplastic (487 aa).

Met-1 carries the post-translational modification N-acetylmethionine. NADP(+) contacts are provided by residues 13 to 18, 36 to 38, 80 to 82, and Asn-108; these read GLAVMG, NRT, and VKA. Substrate contacts are provided by residues Asn-108 and 134-136; that span reads SGG. The active-site Proton acceptor is the Lys-188. 191 to 192 is a binding site for substrate; sequence HN. The Proton donor role is filled by Glu-195. Substrate-binding residues include Tyr-196, Lys-266, Arg-293, Arg-458, and His-464.

Belongs to the 6-phosphogluconate dehydrogenase family. In terms of assembly, forms homodimer. Forms heterodimers with PGD1 or PGD2.

The protein localises to the plastid. It is found in the chloroplast. It localises to the cytoplasm. Its subcellular location is the cytosol. The catalysed reaction is 6-phospho-D-gluconate + NADP(+) = D-ribulose 5-phosphate + CO2 + NADPH. It participates in carbohydrate degradation; pentose phosphate pathway; D-ribulose 5-phosphate from D-glucose 6-phosphate (oxidative stage): step 3/3. Functionally, catalyzes the oxidative decarboxylation of 6-phosphogluconate to ribulose 5-phosphate and CO(2), with concomitant reduction of NADP to NADPH. The protein is 6-phosphogluconate dehydrogenase, decarboxylating 3, chloroplastic of Arabidopsis thaliana (Mouse-ear cress).